A 1233-amino-acid chain; its full sequence is Structural maintenance of chromosomes protein 1A (1233 aa).

32-39 lines the ATP pocket; sequence GPNGSGKS. 2 coiled-coil regions span residues 104–124 and 163–503; these read EYKI…LEKL and ELAQ…KAEI. Residues 284-293 are compositionally biased toward basic and acidic residues; sequence IKEKDSELNQ. Disordered stretches follow at residues 284 to 308 and 348 to 369; these read IKEK…TSHK and QEFE…TLEE. 2 positions are modified to phosphoserine: Ser-358 and Ser-360. The region spanning 515-629 is the SMC hinge domain; that stretch reads VYGRLIDLCQ…DNVEDARRIA (115 aa). An N6-acetyllysine mark is found at Lys-648 and Lys-713. A coiled-coil region spans residues 667 to 935; it reads DEKAVDKLKE…RHNLLQACKM (269 aa). The tract at residues 947–969 is disordered; it reads MDDISQEEGSSQGEESVSGSQRT. Residues 953–967 show a composition bias toward low complexity; sequence EEGSSQGEESVSGSQ. 4 positions are modified to phosphoserine: Ser-957, Ser-962, Ser-966, and Ser-970. Residues 988–1068 are a coiled coil; sequence EDLKDAQAEE…FEQIKKERFD (81 aa). Lys-1037 is subject to N6-acetyllysine.

Belongs to the SMC family. SMC1 subfamily. As to quaternary structure, forms a heterodimer with SMC3 in cohesin complexes. Cohesin complexes are composed of the SMC1 (SMC1A or SMC1B) and SMC3 heterodimer attached via their SMC hinge domain, RAD21 which link them, and one STAG protein (STAG1, STAG2 or STAG3), which interacts with RAD21. In germ cell cohesin complexes, SMC1A is mutually exclusive with SMC1B. Interacts with STAG3. Found in a complex with CDCA5, SMC3 and RAD21, PDS5A/SCC-112 and PDS5B/APRIN. Found in a complex containing POLE and SMC3. Interacts with BRCA1, SYCP2, NDC80, RPGR and BRAT1. The cohesin complex interacts with the cohesin loading complex subunits NIPBL/Scc2 (via HEAT repeats) and MAU2/Scc4. NIPBL directly contacts all members of the complex, RAD21, SMC1A/B, SMC3 and STAG1. In terms of processing, phosphorylated upon ionizing radiation or DNA methylation. Phosphorylation of Ser-957 and Ser-966 activates it and is required for S-phase checkpoint activation. Ubiquitinated by the DCX(DCAF15) complex, leading to its degradation. As to expression, ubiquitous (at protein level).

Its subcellular location is the nucleus. The protein resides in the chromosome. The protein localises to the centromere. Functionally, involved in chromosome cohesion during cell cycle and in DNA repair. Involved in DNA repair via its interaction with BRCA1 and its related phosphorylation by ATM, and works as a downstream effector in the ATM/NBS1 branch of S-phase checkpoint. Central component of cohesin complex. The cohesin complex is required for the cohesion of sister chromatids after DNA replication. The cohesin complex apparently forms a large proteinaceous ring within which sister chromatids can be trapped. At anaphase, the complex is cleaved and dissociates from chromatin, allowing sister chromatids to segregate. The cohesin complex may also play a role in spindle pole assembly during mitosis. Involved in DNA repair via its interaction with BRCA1 and its related phosphorylation by ATM, or via its phosphorylation by ATR. Works as a downstream effector both in the ATM/NBS1 branch and in the ATR/MSH2 branch of S-phase checkpoint. In Mus musculus (Mouse), this protein is Structural maintenance of chromosomes protein 1A (Smc1a).